Here is a 30-residue protein sequence, read N- to C-terminus: Trypsin inhibitor 6 (30 aa).

Cystine bridges form between C4–C21, C11–C23, and C17–C29.

The protein belongs to the protease inhibitor I7 (squash-type serine protease inhibitor) family.

It is found in the secreted. Functionally, strongly inhibits trypsin, weakly inhibits chymotrypsin. This is Trypsin inhibitor 6 from Cyclanthera pedata (Achocha).